The following is a 237-amino-acid chain: MSNAYKRVLLKLSGEALMGDDAFGINRATIERMVADIAEVVGLGTQLAVVIGGGNIFRGVAGGAAGMDRATADYMGMLATMMNALALQDAMRHAGIVARVQSALRMDQVVEPYIRPRAIRQLEEGKVVIFAAGTGNPFFTTDTAAALRGSEVGAEVVLKATKVDGVYSADPKKDPSATRYTTISFDEAISRNLQVMDATAFALCRDQKLPIRVFSINKPGALKRIVLGEDEGTLVHV.

Residue 11–14 (KLSG) coordinates ATP. G53 contributes to the UMP binding site. Positions 54 and 58 each coordinate ATP. Residues D73 and 134–141 (TGNPFFTT) each bind UMP. The ATP site is built by T161, Y167, and D170.

The protein belongs to the UMP kinase family. In terms of assembly, homohexamer.

It localises to the cytoplasm. It carries out the reaction UMP + ATP = UDP + ADP. The protein operates within pyrimidine metabolism; CTP biosynthesis via de novo pathway; UDP from UMP (UMPK route): step 1/1. Inhibited by UTP. In terms of biological role, catalyzes the reversible phosphorylation of UMP to UDP. In Burkholderia vietnamiensis (strain G4 / LMG 22486) (Burkholderia cepacia (strain R1808)), this protein is Uridylate kinase.